Consider the following 113-residue polypeptide: Iron-sulfur cluster insertion protein ErpA (113 aa).

Iron-sulfur cluster-binding residues include Cys-41, Cys-105, and Cys-107.

The protein belongs to the HesB/IscA family. As to quaternary structure, homodimer. It depends on iron-sulfur cluster as a cofactor.

In terms of biological role, required for insertion of 4Fe-4S clusters for at least IspG. The chain is Iron-sulfur cluster insertion protein ErpA from Actinobacillus pleuropneumoniae serotype 3 (strain JL03).